Consider the following 461-residue polypeptide: MKILFVEPAIFLSAFAMTLTGPLTTQYVYRRIWEETGNYTFSSDSNISECEKNKSSPIFAFQEEVQKKVSRFNLQMDISGLIPGLVSTFILLSISDHYGRKFPMILSSVGALATSVWLCLLCYFAFPFQLLIASTFIGAFCGNYTTFWGACFAYIVDQCKEHKQKTIRIAIIDFLLGLVTGLTGLSSGYFIRELGFEWSFLIIAVSLAVNLIYILFFLGDPVKECSSQNVTMSCSEGFKNLFYRTYMLFKNASGKRRFLLCLLLFTVITYFFVVIGIAPIFILYELDSPLCWNEVFIGYGSALGSASFLTSFLGIWLFSYCMEDIHMAFIGIFTTMTGMAMTAFASTTLMMFLARVPFLFTIVPFSVLRSMLSKVVRSTEQGTLFACIAFLETLGGVTAVSTFNGIYSATVAWYPGFTFLLSAGLLLLPAISLCVVKCTSWNEGSYELLIQEESSEDASDR.

The signal sequence occupies residues 1 to 25; sequence MKILFVEPAIFLSAFAMTLTGPLTT. Over 26 to 73 the chain is Extracellular; it reads QYVYRRIWEETGNYTFSSDSNISECEKNKSSPIFAFQEEVQKKVSRFN. N-linked (GlcNAc...) asparagine glycosylation is found at N38, N46, and N53. A helical membrane pass occupies residues 74 to 94; it reads LQMDISGLIPGLVSTFILLSI. At 95 to 101 the chain is on the cytoplasmic side; that stretch reads SDHYGRK. A helical membrane pass occupies residues 102-124; sequence FPMILSSVGALATSVWLCLLCYF. Over 125–133 the chain is Extracellular; the sequence is AFPFQLLIA. The chain crosses the membrane as a helical span at residues 134–156; that stretch reads STFIGAFCGNYTTFWGACFAYIV. The Cytoplasmic segment spans residues 157-170; that stretch reads DQCKEHKQKTIRIA. The helical transmembrane segment at 171–191 threads the bilayer; the sequence is IIDFLLGLVTGLTGLSSGYFI. Over 192-197 the chain is Extracellular; it reads RELGFE. Residues 198-218 form a helical membrane-spanning segment; sequence WSFLIIAVSLAVNLIYILFFL. At 219-261 the chain is on the cytoplasmic side; that stretch reads GDPVKECSSQNVTMSCSEGFKNLFYRTYMLFKNASGKRRFLLC. The helical transmembrane segment at 262-282 threads the bilayer; it reads LLLFTVITYFFVVIGIAPIFI. The Extracellular segment spans residues 283–294; that stretch reads LYELDSPLCWNE. Residues 295–315 traverse the membrane as a helical segment; the sequence is VFIGYGSALGSASFLTSFLGI. Over 316 to 324 the chain is Cytoplasmic; the sequence is WLFSYCMED. The helical transmembrane segment at 325 to 345 threads the bilayer; the sequence is IHMAFIGIFTTMTGMAMTAFA. At 346 to 347 the chain is on the extracellular side; it reads ST. Residues 348–368 traverse the membrane as a helical segment; sequence TLMMFLARVPFLFTIVPFSVL. At 369-382 the chain is on the cytoplasmic side; it reads RSMLSKVVRSTEQG. The helical transmembrane segment at 383–403 threads the bilayer; it reads TLFACIAFLETLGGVTAVSTF. The Extracellular portion of the chain corresponds to 404 to 415; sequence NGIYSATVAWYP. The chain crosses the membrane as a helical span at residues 416 to 436; the sequence is GFTFLLSAGLLLLPAISLCVV. Residues 437–461 are Cytoplasmic-facing; it reads KCTSWNEGSYELLIQEESSEDASDR. The Tyrosine-based lysosomal-sorting motif signature appears at 446–449; sequence YELL.

The protein belongs to the major facilitator superfamily. SLC46A family.

It localises to the lysosome membrane. The enzyme catalyses estrone 3-sulfate(out) + n H(+)(out) = estrone 3-sulfate(in) + n H(+)(in). The catalysed reaction is 25-hydroxyvitamin D3 sulfate(out) + n H(+)(out) = 25-hydroxyvitamin D3 sulfate(in) + n H(+)(in). It catalyses the reaction cholate(out) + n H(+)(out) = cholate(in) + n H(+)(in). It carries out the reaction glycocholate(out) + n H(+)(out) = glycocholate(in) + n H(+)(in). The enzyme catalyses taurocholate(out) + n H(+)(out) = taurocholate(in) + n H(+)(in). The catalysed reaction is dehydroepiandrosterone 3-sulfate(out) + n H(+)(out) = dehydroepiandrosterone 3-sulfate(in) + n H(+)(in). It catalyses the reaction N-acetyl-D-muramoyl-L-alanyl-D-isoglutamine(out) + n H(+)(out) = N-acetyl-D-muramoyl-L-alanyl-D-isoglutamine(in) + n H(+)(in). It carries out the reaction 2',3'-cGAMP(out) + n H(+)(out) = 2',3'-cGAMP(in) + n H(+)(in). In terms of biological role, lysosomal proton-coupled steroid conjugate and bile acid transporter. Preferentially recognizes lipophilic steroid conjugates or bile acis as endogenous substrates and seems to mediate escape from lysosomes to the cytoplasm. Modulates hepatic cytosolic copper homeostasis, maybe acting as a lysosomal copper transporter and sequestering copper ions in the lysosome. Transports catabolites of non-cleavable antibody-drug conjugates from the lysosome to the cytoplasm. Delivers pathogen-associated molecular patterns to cytosolic pattern recognition receptors as part of the innate immune response to microbes. Selectively transports bacterial muramyl dipeptide (MDP) into the cytosol for recognition by NOD2, triggering inflammatory responses. Likely acts as a redundant importer of cyclic GMP-AMP dinucleotides (cGAMPs) in monocyte and macrophage cell lineages. The transport mechanism, its electrogenicity and stoichiometry remain to be elucidated. This is Lysosomal proton-coupled steroid conjugate and bile acid symporter SLC46A3 from Homo sapiens (Human).